An 889-amino-acid polypeptide reads, in one-letter code: Cytoplasmic aconitate hydratase (889 aa).

Residues Gln86 and 205-207 (DSH) each bind substrate. Residues Cys437, Cys503, and Cys506 each coordinate [4Fe-4S] cluster. Residues Arg536, Arg541, Arg699, and 779–780 (SR) each bind substrate.

It belongs to the aconitase/IPM isomerase family. As to quaternary structure, interacts (when associated with the 4Fe-4S) with FBXL5. Interacts with frataxin(81-210). [4Fe-4S] cluster is required as a cofactor.

The protein localises to the cytoplasm. It localises to the cytosol. It catalyses the reaction citrate = D-threo-isocitrate. Its function is as follows. Bifunctional iron sensor that switches between 2 activities depending on iron availability. Iron deprivation, promotes its mRNA binding activity through which it regulates the expression of genes involved in iron uptake, sequestration and utilization. Binds to iron-responsive elements (IRES) in the untranslated region of target mRNAs preventing for instance the translation of ferritin and aminolevulinic acid synthase and stabilizing the transferrin receptor mRNA. Conversely, when cellular iron levels are high, binds a 4Fe-4S cluster which precludes RNA binding activity and promotes the aconitase activity, the isomerization of citrate to isocitrate via cis-aconitate. This is Cytoplasmic aconitate hydratase (Aco1) from Rattus norvegicus (Rat).